The following is a 477-amino-acid chain: Polyketide synthase-related protein Dhc1 (477 aa).

A Carrier domain is found at 34–112 (EKMTVREGEL…AMTHCVFDRA (79 aa)). O-(pantetheine 4'-phosphoryl)serine is present on Ser72. The segment at 161–322 (LTGATSFLGS…AGEVFLENLV (162 aa)) is ketoreductase (KR) domain. The tract at residues 410 to 435 (VQQQQQQQQRQSQPPRDDAADGSPTE) is disordered. A compositionally biased stretch (low complexity) spans 411–422 (QQQQQQQQRQSQ). Residues 424–435 (PRDDAADGSPTE) show a composition bias toward basic and acidic residues.

It participates in mycotoxin biosynthesis. Its function is as follows. Polyketide synthase-related protein; part of the gene cluster that mediates the biosynthesis of 10,11-dehydrocurvularin, a prevalent fungal phytotoxin with heat shock response and immune-modulatory activities. The highly reducing polyketide synthase Dhc3 is responsible for biosynthesis up to the tetraketide stage. The non-reducing polyketide synthase Dhc5 then conducts four additional chain extension cycles, producing the unreduced part of the nascent octaketide from C-1 to C-8 in 10,11-dehydrocurvularin. The role of Dhc1 in 10,11-dehydrocurvularin biosynthesis has not been identified yet. This chain is Polyketide synthase-related protein Dhc1, found in Alternaria cinerariae.